The following is a 205-amino-acid chain: Cryptic plasmid protein C (205 aa).

Positions 142 to 205 (THGYSDPDDP…RAGNAGKGRF (64 aa)) are disordered. Residues 155-174 (QSMTQAKDLPRNTQEAAQSI) are compositionally biased toward polar residues. Over residues 189 to 205 (QAKKPRRRAGNAGKGRF) the composition is skewed to basic residues.

The sequence is that of Cryptic plasmid protein C (cppC) from Neisseria gonorrhoeae.